Reading from the N-terminus, the 338-residue chain is Anthranilate phosphoribosyltransferase (338 aa).

Residues Gly-81, 84 to 85 (GD), Thr-89, 91 to 94 (NVST), 109 to 117 (KHGNRALSS), and Ala-121 contribute to the 5-phospho-alpha-D-ribose 1-diphosphate site. Anthranilate is bound at residue Gly-81. Residue Ser-93 coordinates Mg(2+). Asn-112 is an anthranilate binding site. Anthranilate is bound at residue Arg-167. Mg(2+)-binding residues include Asp-225 and Glu-226.

This sequence belongs to the anthranilate phosphoribosyltransferase family. Homodimer. Mg(2+) serves as cofactor.

It catalyses the reaction N-(5-phospho-beta-D-ribosyl)anthranilate + diphosphate = 5-phospho-alpha-D-ribose 1-diphosphate + anthranilate. The protein operates within amino-acid biosynthesis; L-tryptophan biosynthesis; L-tryptophan from chorismate: step 2/5. In terms of biological role, catalyzes the transfer of the phosphoribosyl group of 5-phosphorylribose-1-pyrophosphate (PRPP) to anthranilate to yield N-(5'-phosphoribosyl)-anthranilate (PRA). The polypeptide is Anthranilate phosphoribosyltransferase (Chelativorans sp. (strain BNC1)).